A 368-amino-acid chain; its full sequence is 3-dehydroquinate synthase (368 aa).

Residues 71–76, 105–109, 129–130, lysine 142, lysine 151, and 169–172 contribute to the NAD(+) site; these read DGESFK, GVIGD, TT, and TLRT. Zn(2+) contacts are provided by glutamate 184, histidine 247, and histidine 264.

This sequence belongs to the sugar phosphate cyclases superfamily. Dehydroquinate synthase family. It depends on Co(2+) as a cofactor. Requires Zn(2+) as cofactor. NAD(+) serves as cofactor.

Its subcellular location is the cytoplasm. The catalysed reaction is 7-phospho-2-dehydro-3-deoxy-D-arabino-heptonate = 3-dehydroquinate + phosphate. Its pathway is metabolic intermediate biosynthesis; chorismate biosynthesis; chorismate from D-erythrose 4-phosphate and phosphoenolpyruvate: step 2/7. Its function is as follows. Catalyzes the conversion of 3-deoxy-D-arabino-heptulosonate 7-phosphate (DAHP) to dehydroquinate (DHQ). The protein is 3-dehydroquinate synthase of Ralstonia pickettii (strain 12J).